The following is a 296-amino-acid chain: Enoyl-CoA hydratase AFT3-1 (296 aa).

The Peroxisomal targeting signal type 1 signature appears at 294-296; sequence PKL.

This sequence belongs to the enoyl-CoA hydratase/isomerase family.

Its subcellular location is the peroxisome. The catalysed reaction is a (3S)-3-hydroxyacyl-CoA = a (2E)-enoyl-CoA + H2O. The enzyme catalyses a 4-saturated-(3S)-3-hydroxyacyl-CoA = a (3E)-enoyl-CoA + H2O. The protein operates within mycotoxin biosynthesis. Functionally, enoyl-CoA hydratase; part of the gene clusters that mediate the biosynthesis of the host-selective toxins (HSTs) AF-toxins responsible for Alternaria black spot of strawberry disease by the strawberry pathotype. AF-toxin I and III are valine derivatives of 2,3-dyhydroxy-isovaleric acid and 2-hydroxy-isovaleric acid respectively, while AF II is an isoleucine derivative of 2-hydroxy-valeric acid. These derivatives are bound to a 9,10-epoxy-8-hydroxy-9-methyl-decatrienoic acid (EDA) moiety. On cellular level, AF-toxins affect plasma membrane of susceptible cells and cause a sudden increase in loss of K(+) after a few minutes of toxin treatment. The aldo-keto reductase AFTS1 catalyzes the conversion of 2-keto-isovaleric acid (2-KIV) to 2-hydroxy-isovaleric acid (2-HIV) by reduction of its ketone to an alcohol. The acyl-CoA ligase AFT1, the hydrolase AFT2 and the enoyl-CoA hydratases AFT3 and AFT6, but also the polyketide synthase AFT9, the acyl-CoA dehydrogenase AFT10, the cytochrome P450 monooxygenase AFT11 and the oxidoreductase AFT12 are all involved in the biosynthesis of the AK-, AF- and ACT-toxin common EDA structural moiety. The exact function of each enzyme, and of additional enzymes identified within the AF-toxin clusters have still to be determined. In Alternaria alternata (Alternaria rot fungus), this protein is Enoyl-CoA hydratase AFT3-1 (AFT3-1).